The following is a 163-amino-acid chain: Phosphopantetheine adenylyltransferase (163 aa).

Thr10 is a binding site for substrate. Residues 10–11 and His18 each bind ATP; that span reads TF. Residues Lys42, Leu74, and Arg88 each coordinate substrate. ATP is bound by residues 89 to 91, Glu99, and 124 to 130; these read GLR and NSFISST.

The protein belongs to the bacterial CoaD family. As to quaternary structure, homohexamer. Mg(2+) is required as a cofactor.

It is found in the cytoplasm. It catalyses the reaction (R)-4'-phosphopantetheine + ATP + H(+) = 3'-dephospho-CoA + diphosphate. It functions in the pathway cofactor biosynthesis; coenzyme A biosynthesis; CoA from (R)-pantothenate: step 4/5. In terms of biological role, reversibly transfers an adenylyl group from ATP to 4'-phosphopantetheine, yielding dephospho-CoA (dPCoA) and pyrophosphate. This is Phosphopantetheine adenylyltransferase from Shewanella baltica (strain OS155 / ATCC BAA-1091).